Consider the following 161-residue polypeptide: DNA-directed RNA polymerase 18 kDa subunit (161 aa).

This sequence belongs to the poxviridae DNA-directed RNA polymerase 18 kDa subunit family. In terms of assembly, the DNA-dependent RNA polymerase used for intermediate and late genes expression consists of eight subunits Rpo30/OPG66, Rpo7/OPG90, Rpo22/OPG103, Rpo147/OPG105, Rpo18/OPG119, Rpo19/OPG131, Rpo132/OPG151 and Rpo35/OPG156. The same holoenzyme, with the addition of the transcription-specificity factor OPG109, is used for early gene expression.

Its subcellular location is the virion. The catalysed reaction is RNA(n) + a ribonucleoside 5'-triphosphate = RNA(n+1) + diphosphate. In terms of biological role, part of the DNA-dependent RNA polymerase which catalyzes the transcription of viral DNA into RNA using the four ribonucleoside triphosphates as substrates. Responsible for the transcription of early, intermediate and late genes. DNA-dependent RNA polymerase associates with the early transcription factor (ETF), itself composed of OPG118 and OPG133, thereby allowing the early genes transcription. Late transcription, and probably also intermediate transcription, require newly synthesized RNA polymerase. The sequence is that of DNA-directed RNA polymerase 18 kDa subunit (OPG119) from Vaccinia virus (strain Ankara) (VACV).